We begin with the raw amino-acid sequence, 362 residues long: H-2 class I histocompatibility antigen, L-D alpha chain (362 aa).

Residues 1–24 (MGAMAPRTLLLLLAAALAPTQTRA) form the signal peptide. An alpha-1 region spans residues 25–114 (GPHSMRYFET…LLGYYNQSAG (90 aa)). Topologically, residues 25-309 (GPHSMRYFET…PPPSTDSYMV (285 aa)) are extracellular. N-linked (GlcNAc...) asparagine glycosylation occurs at Asn-110. The interval 115-206 (GTHTLQWMYG…KNGNATLLRT (92 aa)) is alpha-2. Cys-125 and Cys-188 are oxidised to a cystine. 2 N-linked (GlcNAc...) asparagine glycosylation sites follow: Asn-200 and Asn-280. Positions 207–298 (DSPKAHVTHH…GLPEPLTLRW (92 aa)) are alpha-3. Residues 209–297 (PKAHVTHHPR…EGLPEPLTLR (89 aa)) form the Ig-like C1-type domain. Cysteines 227 and 283 form a disulfide. The segment at 299-309 (EPPPSTDSYMV) is connecting peptide. Residues 310–331 (IVAVLGVLGAMAIIGAVVAFVM) traverse the membrane as a helical segment. Topologically, residues 332-362 (KRRRNTGGKGGDYALAPGSQSSEMSLRDCKA) are cytoplasmic. The disordered stretch occupies residues 340–362 (KGGDYALAPGSQSSEMSLRDCKA). Ser-353 and Ser-356 each carry phosphoserine.

It belongs to the MHC class I family. As to quaternary structure, heterodimer of an alpha chain and a beta chain (beta-2-microglobulin).

It localises to the membrane. In terms of biological role, involved in the presentation of foreign antigens to the immune system. The protein is H-2 class I histocompatibility antigen, L-D alpha chain (H2-L) of Mus musculus (Mouse).